A 304-amino-acid polypeptide reads, in one-letter code: D-alanine--D-alanine ligase (304 aa).

In terms of domain architecture, ATP-grasp spans K100 to K301. An ATP-binding site is contributed by E129–T184. Positions 256, 268, and 270 each coordinate Mg(2+).

It belongs to the D-alanine--D-alanine ligase family. The cofactor is Mg(2+). It depends on Mn(2+) as a cofactor.

It localises to the cytoplasm. It catalyses the reaction 2 D-alanine + ATP = D-alanyl-D-alanine + ADP + phosphate + H(+). The protein operates within cell wall biogenesis; peptidoglycan biosynthesis. Cell wall formation. This is D-alanine--D-alanine ligase from Coprothermobacter proteolyticus (strain ATCC 35245 / DSM 5265 / OCM 4 / BT).